The following is a 159-amino-acid chain: Probable cyclic pyranopterin monophosphate synthase (159 aa).

Substrate contacts are provided by residues 75 to 77 (LCH) and 111 to 112 (ME). Aspartate 126 is an active-site residue.

Belongs to the MoaC family. In terms of assembly, homohexamer; trimer of dimers.

It catalyses the reaction (8S)-3',8-cyclo-7,8-dihydroguanosine 5'-triphosphate = cyclic pyranopterin phosphate + diphosphate. It functions in the pathway cofactor biosynthesis; molybdopterin biosynthesis. Its function is as follows. Catalyzes the conversion of (8S)-3',8-cyclo-7,8-dihydroguanosine 5'-triphosphate to cyclic pyranopterin monophosphate (cPMP). The chain is Probable cyclic pyranopterin monophosphate synthase from Pyrococcus abyssi (strain GE5 / Orsay).